The following is a 142-amino-acid chain: Large ribosomal subunit protein uL13 (142 aa).

This sequence belongs to the universal ribosomal protein uL13 family. Part of the 50S ribosomal subunit.

Its function is as follows. This protein is one of the early assembly proteins of the 50S ribosomal subunit, although it is not seen to bind rRNA by itself. It is important during the early stages of 50S assembly. The chain is Large ribosomal subunit protein uL13 from Polynucleobacter asymbioticus (strain DSM 18221 / CIP 109841 / QLW-P1DMWA-1) (Polynucleobacter necessarius subsp. asymbioticus).